The chain runs to 442 residues: SPRY domain-containing protein 3 (442 aa).

The 188-residue stretch at aspartate 17–glycine 204 folds into the B30.2/SPRY domain. The segment at glutamate 371–glycine 394 is disordered. Acidic residues predominate over residues glycine 372 to proline 390.

The protein is SPRY domain-containing protein 3 (SPRYD3) of Pongo abelii (Sumatran orangutan).